A 240-amino-acid polypeptide reads, in one-letter code: Serine protease SplB (240 aa).

The N-terminal stretch at 1–36 is a signal peptide; that stretch reads MNKNVVIKSLATLTILTSVTGIGTTLVEEVQQTAKA. Catalysis depends on charge relay system residues H75, D113, and S193.

The protein belongs to the peptidase S1B family.

The protein resides in the secreted. Its function is as follows. Serine protease that cleaves specifically after the sequence Trp-Glu-Leu-Gln. The chain is Serine protease SplB (splB) from Staphylococcus aureus (strain Mu3 / ATCC 700698).